Here is a 490-residue protein sequence, read N- to C-terminus: COP9 signalosome complex subunit 2 (490 aa).

The segment covering 1-30 has biased composition (acidic residues); that stretch reads MSDDDFMQDSDQEYDFEYEDDEEEDTGDVD. The segment at 1 to 32 is disordered; sequence MSDDDFMQDSDQEYDFEYEDDEEEDTGDVDIE. In terms of domain architecture, PCI spans 250 to 418; it reads SEENWKEAQS…GVLELESRED (169 aa). A disordered region spans residues 469–490; that stretch reads DTMRSMGSGKRGRRVGLTQRAY.

Belongs to the CSN2 family. As to quaternary structure, component of the COP9 signalosome (CSN) complex.

The protein resides in the cytoplasm. It is found in the nucleus. In terms of biological role, component of the COP9 signalosome (CSN) complex that acts as an regulator of the ubiquitin (Ubl) conjugation pathway by mediating the deneddylation of the cullin subunit of SCF-type E3 ubiquitin-protein ligase complexes. The CSN complex is involved in the regulation of the circadian clock through its control of the stability of the SCF(FWD-1) complex. The chain is COP9 signalosome complex subunit 2 (csn-2) from Neurospora crassa (strain ATCC 24698 / 74-OR23-1A / CBS 708.71 / DSM 1257 / FGSC 987).